The sequence spans 536 residues: Glycine--tRNA ligase (536 aa).

An insert region spans residues 56 to 67; sequence LVSPAGAPSTFE. Substrate is bound by residues Arg106 and Glu213. ATP-binding positions include 245–247, 255–260, and 333–334; these read RNE, FRSREF, and EL. Residue 260-264 coordinates substrate; sequence FEQME. The interval 350-372 is insert; the sequence is EGKLDPATNPMTVELNEHGKPKH. Residue 396–400 coordinates substrate; that stretch reads EPSAG. 400-403 serves as a coordination point for ATP; it reads GADR.

The protein belongs to the class-II aminoacyl-tRNA synthetase family. In terms of assembly, homodimer.

The protein resides in the cytoplasm. It catalyses the reaction tRNA(Gly) + glycine + ATP = glycyl-tRNA(Gly) + AMP + diphosphate. Catalyzes the attachment of glycine to tRNA(Gly). The chain is Glycine--tRNA ligase from Rhodopirellula baltica (strain DSM 10527 / NCIMB 13988 / SH1).